Here is a 187-residue protein sequence, read N- to C-terminus: MAQAAGVRRQLDSLTRNIFLRDVGRTVPEKSGAPLTGDSEVAPSVSLQIFLYFNAFYFPFWWVCYVIMLQLKYVLLPDYYKFILVVLLILMSVIEVIRLYLGYSGNLQEKVPELAGFCLLSILLQLPLLLFLLCDPGLEPLPLERAVHGILTAFLLIQIPISIFALRKATRHLAGRFHLLGDLDGRA.

4 helical membrane passes run 49–69 (IFLYFNAFYFPFWWVCYVIML), 82–102 (FILVVLLILMSVIEVIRLYLG), 114–134 (LAGFCLLSILLQLPLLLFLLC), and 146–166 (AVHGILTAFLLIQIPISIFAL).

Belongs to the TMEM17 family. Part of the tectonic-like complex (also named B9 complex).

Its subcellular location is the cell projection. The protein localises to the cilium membrane. Its function is as follows. Transmembrane component of the tectonic-like complex, a complex localized at the transition zone of primary cilia and acting as a barrier that prevents diffusion of transmembrane proteins between the cilia and plasma membranes. Required for ciliogenesis and sonic hedgehog/SHH signaling. This Xenopus tropicalis (Western clawed frog) protein is Transmembrane protein 17A (tmem17-a).